A 533-amino-acid chain; its full sequence is (E)-beta-farnesene synthase (533 aa).

Mg(2+) is bound by residues Asp-286, Asp-290, Asn-430, Ser-434, and Glu-438. The DDXXD motif motif lies at Asp-286–Asp-290.

This sequence belongs to the terpene synthase family. Requires Mg(2+) as cofactor. Co(2+) is required as a cofactor. The cofactor is Mn(2+).

The protein resides in the cytoplasm. The catalysed reaction is (2E,6E)-farnesyl diphosphate = (E)-beta-farnesene + diphosphate. Its pathway is secondary metabolite biosynthesis; terpenoid biosynthesis. Sesquiterpene cyclase catalyzing the production of sixfold more beta-farnesene than alpha-bergamotene from farnesyl diphosphate. Involved in indirect defense by producing volatile signals attracting natural enemies of herbivores. This is (E)-beta-farnesene synthase from Zea perennis (Perennial teosinte).